The following is a 116-amino-acid chain: MNEKKQSRLRRAKSTRLHIRALGATRLCVNRTPRHIYAQVISADGGKVLAQASTLDTSLRSGTTGNVEAATKVGALIAERAKAAGVTKVAFDRSGFKYHGRIKALADAAREGGLEF.

This sequence belongs to the universal ribosomal protein uL18 family. In terms of assembly, part of the 50S ribosomal subunit; part of the 5S rRNA/L5/L18/L25 subcomplex. Contacts the 5S and 23S rRNAs.

This is one of the proteins that bind and probably mediate the attachment of the 5S RNA into the large ribosomal subunit, where it forms part of the central protuberance. The sequence is that of Large ribosomal subunit protein uL18 from Acinetobacter baylyi (strain ATCC 33305 / BD413 / ADP1).